An 81-amino-acid chain; its full sequence is RNA-binding protein Hfq (81 aa).

The Sm domain occupies Asp-11–Ile-71.

Belongs to the Hfq family. Homohexamer.

RNA chaperone that binds small regulatory RNA (sRNAs) and mRNAs to facilitate mRNA translational regulation in response to envelope stress, environmental stress and changes in metabolite concentrations. Also binds with high specificity to tRNAs. This is RNA-binding protein Hfq from Clostridium acetobutylicum (strain ATCC 824 / DSM 792 / JCM 1419 / IAM 19013 / LMG 5710 / NBRC 13948 / NRRL B-527 / VKM B-1787 / 2291 / W).